The chain runs to 274 residues: Enoyl-CoA isomerase/hydratase fer4 (274 aa).

Residues 77-81 (AGADL) and Gly-124 each bind substrate. A coiled-coil region spans residues 79–109 (ADLKERREMSEAEVIEFLQDLRHMLEQVEKL).

This sequence belongs to the enoyl-CoA hydratase/isomerase family.

It carries out the reaction a (3S)-3-hydroxyacyl-CoA = a (2E)-enoyl-CoA + H2O. It catalyses the reaction a 4-saturated-(3S)-3-hydroxyacyl-CoA = a (3E)-enoyl-CoA + H2O. It functions in the pathway siderophore biosynthesis. Functionally, enoyl-CoA isomerase/hydratase; part of the gene cluster that mediates the biosynthesis of siderophore ferrichrome A which is contributing to organismal virulence. The first step of ferrichrome A biosynthesis is performed by the HMG-CoA synthase hcs1 which catalyzes the generation of HMG-CoA and CoA using acetoacetyl-CoA and acetyl-CoA as substrates. The enoyl-CoA isomerase/hydratase fer4 then catalyzes the conversion of hcs1-produced HMG-CoA to methylglutaconyl-CoA. The acyltransferase fer5 then fuses the fer4-generated methylglutaconyl-CoA with sid1-generated hydroxyornithine to yield methylglutaconyl hydroxyornithine. Methylglutaconyl hydroxyornithine is then available for use by the NRPS fer3 to generate ferrichrome A. This Mycosarcoma maydis (Corn smut fungus) protein is Enoyl-CoA isomerase/hydratase fer4.